Reading from the N-terminus, the 425-residue chain is Glucose-1-phosphate adenylyltransferase (425 aa).

Alpha-D-glucose 1-phosphate contacts are provided by residues tyrosine 109, glycine 175, 190–191, and serine 208; that span reads EK.

Belongs to the bacterial/plant glucose-1-phosphate adenylyltransferase family. In terms of assembly, homotetramer.

It carries out the reaction alpha-D-glucose 1-phosphate + ATP + H(+) = ADP-alpha-D-glucose + diphosphate. Its pathway is glycan biosynthesis; glycogen biosynthesis. Its function is as follows. Involved in the biosynthesis of ADP-glucose, a building block required for the elongation reactions to produce glycogen. Catalyzes the reaction between ATP and alpha-D-glucose 1-phosphate (G1P) to produce pyrophosphate and ADP-Glc. The polypeptide is Glucose-1-phosphate adenylyltransferase (Saccharophagus degradans (strain 2-40 / ATCC 43961 / DSM 17024)).